The sequence spans 130 residues: Small ribosomal subunit protein uS11 (130 aa).

Belongs to the universal ribosomal protein uS11 family. As to quaternary structure, part of the 30S ribosomal subunit. Interacts with proteins S7 and S18. Binds to IF-3.

In terms of biological role, located on the platform of the 30S subunit, it bridges several disparate RNA helices of the 16S rRNA. Forms part of the Shine-Dalgarno cleft in the 70S ribosome. In Psychrobacter sp. (strain PRwf-1), this protein is Small ribosomal subunit protein uS11.